Here is a 273-residue protein sequence, read N- to C-terminus: Light-independent protochlorophyllide reductase iron-sulfur ATP-binding protein (273 aa).

ATP-binding positions include 12-17 (GIGKST) and K41. Residue S16 participates in Mg(2+) binding. [4Fe-4S] cluster is bound by residues C97 and C131. 182 to 183 (NR) contacts ATP.

It belongs to the NifH/BchL/ChlL family. In terms of assembly, homodimer. Protochlorophyllide reductase is composed of three subunits; BchL, BchN and BchB. It depends on [4Fe-4S] cluster as a cofactor.

The catalysed reaction is chlorophyllide a + oxidized 2[4Fe-4S]-[ferredoxin] + 2 ADP + 2 phosphate = protochlorophyllide a + reduced 2[4Fe-4S]-[ferredoxin] + 2 ATP + 2 H2O. It participates in porphyrin-containing compound metabolism; bacteriochlorophyll biosynthesis (light-independent). In terms of biological role, component of the dark-operative protochlorophyllide reductase (DPOR) that uses Mg-ATP and reduced ferredoxin to reduce ring D of protochlorophyllide (Pchlide) to form chlorophyllide a (Chlide). This reaction is light-independent. The L component serves as a unique electron donor to the NB-component of the complex, and binds Mg-ATP. This chain is Light-independent protochlorophyllide reductase iron-sulfur ATP-binding protein, found in Chloroflexus aggregans (strain MD-66 / DSM 9485).